Reading from the N-terminus, the 98-residue chain is MARPKKCRQLSSCVPCSLFKPNGIPSVELTHIQLEADEFEALELGDVQRLSQLDAAALMGISRQTFGYLLASARKKVATAITQGEVLRLPSKTDKDLS.

This sequence belongs to the UPF0251 family.

This chain is UPF0251 protein Sputw3181_3483, found in Shewanella sp. (strain W3-18-1).